A 496-amino-acid polypeptide reads, in one-letter code: MEASRQVRVRYAPSPTGRLHVGGVRTALFNWLFARKHGGVFILRIEDTDLERSTEESVEQLKRSLRWIGLDWDEGPDVGGPHAPYRQTERLELYRRAARRLLESGAAYYDFATPEELTRFRQRARAEGRPPIYTGGPYREMDPEEALRRVRMGEPHTVRFKTPREGRTVFEDIIRGPVGFENATIEDFVLLKSTGTPTYNFAAAVDDAEMQITHVIRGDDHISNTPRQIMIHRALGHELPAFAHVPQVLGPDRKKLSKRHGAASVEDFAEQGILPEALFNYLALLGAGYAADEEIFAPEELAERFRLEKVSGNPAIFDEQKLLAINAVYIRRKSPEELAMLAAPMLSERGVADAGELERDMPRLVRIMELLRERLQRTTDIPEAAGYFYGERLDYDREQFEKQFGKEFVRENLPELYRRLKALPEWTADAIESCVRGLAAEKEKGARHLIHPLRFATTGRTVSAGLFETMELIGRERCLLRIADVLERLQSPERSL.

Positions 13-23 (PSPTGRLHVGG) match the 'HIGH' region motif. Positions 255 to 259 (KLSKR) match the 'KMSKS' region motif. Position 258 (Lys-258) interacts with ATP.

Belongs to the class-I aminoacyl-tRNA synthetase family. Glutamate--tRNA ligase type 1 subfamily. In terms of assembly, monomer.

The protein resides in the cytoplasm. It carries out the reaction tRNA(Glu) + L-glutamate + ATP = L-glutamyl-tRNA(Glu) + AMP + diphosphate. Its function is as follows. Catalyzes the attachment of glutamate to tRNA(Glu) in a two-step reaction: glutamate is first activated by ATP to form Glu-AMP and then transferred to the acceptor end of tRNA(Glu). In Rubrobacter xylanophilus (strain DSM 9941 / JCM 11954 / NBRC 16129 / PRD-1), this protein is Glutamate--tRNA ligase 2.